The following is a 93-amino-acid chain: Acyl carrier protein AcpXL (93 aa).

A Carrier domain is found at 2-88; it reads SSTFDKVADI…NLCAKIDELV (87 aa). Residue Ser-37 is modified to O-(pantetheine 4'-phosphoryl)serine.

Post-translationally, 4'-phosphopantetheine is transferred from CoA to a specific serine of apo-ACP by AcpS. This modification is essential for activity because fatty acids are bound in thioester linkage to the sulfhydryl of the prosthetic group.

Its subcellular location is the cytoplasm. Its pathway is glycolipid biosynthesis; KDO(2)-lipid A biosynthesis. Carrier of the growing fatty acid chain in fatty acid biosynthesis. Is involved in the transfer of long hydroxylated fatty acids to lipid A. This is Acyl carrier protein AcpXL (acpXL) from Brucella melitensis biotype 1 (strain ATCC 23456 / CCUG 17765 / NCTC 10094 / 16M).